A 253-amino-acid chain; its full sequence is 5'/3'-nucleotidase SurE (253 aa).

The a divalent metal cation site is built by Asp8, Asp9, Ser39, and Asn92.

Belongs to the SurE nucleotidase family. The cofactor is a divalent metal cation.

The protein resides in the cytoplasm. It catalyses the reaction a ribonucleoside 5'-phosphate + H2O = a ribonucleoside + phosphate. It carries out the reaction a ribonucleoside 3'-phosphate + H2O = a ribonucleoside + phosphate. The catalysed reaction is [phosphate](n) + H2O = [phosphate](n-1) + phosphate + H(+). In terms of biological role, nucleotidase with a broad substrate specificity as it can dephosphorylate various ribo- and deoxyribonucleoside 5'-monophosphates and ribonucleoside 3'-monophosphates with highest affinity to 3'-AMP. Also hydrolyzes polyphosphate (exopolyphosphatase activity) with the preference for short-chain-length substrates (P20-25). Might be involved in the regulation of dNTP and NTP pools, and in the turnover of 3'-mononucleotides produced by numerous intracellular RNases (T1, T2, and F) during the degradation of various RNAs. This chain is 5'/3'-nucleotidase SurE, found in Cronobacter sakazakii (strain ATCC BAA-894) (Enterobacter sakazakii).